A 345-amino-acid polypeptide reads, in one-letter code: S-adenosylmethionine:tRNA ribosyltransferase-isomerase (345 aa).

This sequence belongs to the QueA family. As to quaternary structure, monomer.

Its subcellular location is the cytoplasm. It catalyses the reaction 7-aminomethyl-7-carbaguanosine(34) in tRNA + S-adenosyl-L-methionine = epoxyqueuosine(34) in tRNA + adenine + L-methionine + 2 H(+). It functions in the pathway tRNA modification; tRNA-queuosine biosynthesis. In terms of biological role, transfers and isomerizes the ribose moiety from AdoMet to the 7-aminomethyl group of 7-deazaguanine (preQ1-tRNA) to give epoxyqueuosine (oQ-tRNA). The sequence is that of S-adenosylmethionine:tRNA ribosyltransferase-isomerase from Shewanella baltica (strain OS155 / ATCC BAA-1091).